The chain runs to 216 residues: Probable nicotinate-nucleotide adenylyltransferase (216 aa).

The protein belongs to the NadD family.

The catalysed reaction is nicotinate beta-D-ribonucleotide + ATP + H(+) = deamido-NAD(+) + diphosphate. It functions in the pathway cofactor biosynthesis; NAD(+) biosynthesis; deamido-NAD(+) from nicotinate D-ribonucleotide: step 1/1. In terms of biological role, catalyzes the reversible adenylation of nicotinate mononucleotide (NaMN) to nicotinic acid adenine dinucleotide (NaAD). This chain is Probable nicotinate-nucleotide adenylyltransferase, found in Shewanella baltica (strain OS223).